The sequence spans 289 residues: Protease HtpX homolog (289 aa).

2 helical membrane passes run 8-28 (LALL…VIGG) and 29-49 (SSGL…SWYQ). Position 132 (His132) interacts with Zn(2+). Glu133 is a catalytic residue. A Zn(2+)-binding site is contributed by His136. The next 2 membrane-spanning stretches (helical) occupy residues 151–171 (VAGA…FGGI) and 183–203 (LGVL…QLAI). Glu208 is a Zn(2+) binding site.

The protein belongs to the peptidase M48B family. Requires Zn(2+) as cofactor.

It is found in the cell inner membrane. This is Protease HtpX homolog from Nostoc sp. (strain PCC 7120 / SAG 25.82 / UTEX 2576).